The following is a 218-amino-acid chain: Protease PrsW (218 aa).

The chain crosses the membrane as a helical span at residues 1-23; sequence MFAIISAGIAPGIALLSYFYLKD. At 24-30 the chain is on the cytoplasmic side; the sequence is QYDNEPV. Residues 31–53 form a helical membrane-spanning segment; sequence HMVLRSFFLGVVLVFPIMFIQYV. Residues 54-98 are Extracellular-facing; the sequence is LEKENVGGGSFFVSFLSSGFLEESLKWFILMISVYPHAHFDEHYD. The helical transmembrane segment at 99–121 threads the bilayer; the sequence is GIVYGASVSLGFATLENILYLIG. Residues 122–129 lie on the Cytoplasmic side of the membrane; it reads HGVEHAFV. Residues 130 to 151 traverse the membrane as a helical segment; sequence RALLPVSCHALIGVIMGFYLGK. The Extracellular segment spans residues 152–180; it reads ARFSADKARVKWLTLSLVVPSLLHGSYDF. Residues 181 to 203 form a helical membrane-spanning segment; sequence ILTALSNWIYYMLPFMVFLWWFG. At 204-218 the chain is on the cytoplasmic side; that stretch reads LRKAKKARSVNMMQV.

It belongs to the protease PrsW family.

It localises to the cell membrane. Involved in the degradation of anti-sigma-W factor RsiW. Responsible for Site-1 cleavage of the RsiW anti-sigma factor. This results, after two other proteolytic steps catalyzed by the RasP and ClpXP proteases, in the release of SigW and the transcription activation of the genes under the control of the sigma-W factor. Seems to be responsible for sensing antimicrobial peptides that damage the cell membrane and other agents that cause cell envelope stress. Therefore it is a protease governing regulated intramembrane proteolysis and resistance to antimicrobial peptides in B.subtilis. The polypeptide is Protease PrsW (Bacillus subtilis (strain 168)).